The chain runs to 247 residues: ATP synthase subunit a, chloroplastic (247 aa).

5 helical membrane-spanning segments follow: residues 38–58, 95–115, 134–154, 199–219, and 220–240; these read QVLITSWVVIAILLGSATVAV, VPFIGTMFLFIFVSNWSGALL, INTTVALALPTSVAYFYAGLT, LVVVVLVSLVPSVVPIPVMFL, and GLFTSGIQALIFATLAAAYIG.

The protein belongs to the ATPase A chain family. F-type ATPases have 2 components, CF(1) - the catalytic core - and CF(0) - the membrane proton channel. CF(1) has five subunits: alpha(3), beta(3), gamma(1), delta(1), epsilon(1). CF(0) has four main subunits: a, b, b' and c.

Its subcellular location is the plastid. It localises to the chloroplast thylakoid membrane. Its function is as follows. Key component of the proton channel; it plays a direct role in the translocation of protons across the membrane. This is ATP synthase subunit a, chloroplastic from Platanus occidentalis (Sycamore).